Reading from the N-terminus, the 428-residue chain is GTPase Obg (428 aa).

An Obg domain is found at 1-158; that stretch reads MFIDIAKVFI…LSIVLELKLL (158 aa). Positions 159–331 constitute an OBG-type G domain; the sequence is ADVGLLGFPN…VIKEAARMLK (173 aa). GTP contacts are provided by residues 165–172, 190–194, 212–215, 282–285, and 312–314; these read GFPNVGKS, FTTLK, DIPG, NKSD, and SAA. Mg(2+) contacts are provided by S172 and T192. In terms of domain architecture, OCT spans 345-428; that stretch reads MYIPEEKKFT…LNDFEFEYLL (84 aa).

It belongs to the TRAFAC class OBG-HflX-like GTPase superfamily. OBG GTPase family. In terms of assembly, monomer. Mg(2+) is required as a cofactor.

It is found in the cytoplasm. Functionally, an essential GTPase which binds GTP, GDP and possibly (p)ppGpp with moderate affinity, with high nucleotide exchange rates and a fairly low GTP hydrolysis rate. Plays a role in control of the cell cycle, stress response, ribosome biogenesis and in those bacteria that undergo differentiation, in morphogenesis control. The chain is GTPase Obg from Clostridium botulinum (strain Alaska E43 / Type E3).